Here is a 621-residue protein sequence, read N- to C-terminus: Protein CASP (621 aa).

Over 1–574 the chain is Cytoplasmic; it reads MEIVSRAWES…ILATPKSRTV (574 aa). Coiled-coil stretches lie at residues 101–445 and 473–525; these read LLKG…VQDI and ILTS…FLQS. The chain crosses the membrane as a helical; Anchor for type IV membrane protein span at residues 575-595; the sequence is FFSYLLILHALIMLVLYKFAF. Residues 596–621 are Lumenal-facing; that stretch reads DQSVVRDAETECEYKFHQHMLDNHKQ.

Belongs to the CASP family.

The protein localises to the golgi apparatus membrane. May be involved in intra-Golgi retrograde transport. This is Protein CASP (ceh-44) from Caenorhabditis elegans.